Reading from the N-terminus, the 274-residue chain is 2,3,4,5-tetrahydropyridine-2,6-dicarboxylate N-succinyltransferase (274 aa).

Substrate is bound by residues arginine 106 and aspartate 143.

This sequence belongs to the transferase hexapeptide repeat family. In terms of assembly, homotrimer.

Its subcellular location is the cytoplasm. The enzyme catalyses (S)-2,3,4,5-tetrahydrodipicolinate + succinyl-CoA + H2O = (S)-2-succinylamino-6-oxoheptanedioate + CoA. It functions in the pathway amino-acid biosynthesis; L-lysine biosynthesis via DAP pathway; LL-2,6-diaminopimelate from (S)-tetrahydrodipicolinate (succinylase route): step 1/3. The polypeptide is 2,3,4,5-tetrahydropyridine-2,6-dicarboxylate N-succinyltransferase (Rickettsia rickettsii (strain Sheila Smith)).